Reading from the N-terminus, the 623-residue chain is C2H2-type transcription factor zfpA (623 aa).

A compositionally biased stretch (polar residues) spans Gly-202–Val-219. 2 disordered regions span residues Gly-202 to Arg-256 and Ser-468 to Ala-493. A compositionally biased stretch (low complexity) spans Ser-227 to Ser-239. The segment at Gly-255–His-276 adopts a C2H2-type zinc-finger fold.

Its subcellular location is the nucleus. Functionally, transcription factor involved in fungal growth and virulence potential. Negatively regulates antifungal drug susceptibility via transcriptional inhibition of the expressions of drug efflux pumps in a crzA-dependent way. Under the treatment of azoles, both zfpA and crzA transfer to nuclei and coregulate the expression of multidrug transporters and then keep normal drug susceptibility in fungal cells. In Aspergillus fumigatus (strain CBS 144.89 / FGSC A1163 / CEA10) (Neosartorya fumigata), this protein is C2H2-type transcription factor zfpA.